The following is a 272-amino-acid chain: Rhamnulose-1-phosphate aldolase (272 aa).

Glutamate 117 is a catalytic residue. Zn(2+) contacts are provided by histidine 141, histidine 143, and histidine 212.

The protein belongs to the aldolase class II family. RhaD subfamily. The cofactor is Zn(2+).

The protein localises to the cytoplasm. The enzyme catalyses L-rhamnulose 1-phosphate = (S)-lactaldehyde + dihydroxyacetone phosphate. The protein operates within carbohydrate degradation; L-rhamnose degradation; glycerone phosphate from L-rhamnose: step 3/3. Catalyzes the reversible cleavage of L-rhamnulose-1-phosphate to dihydroxyacetone phosphate (DHAP) and L-lactaldehyde. The protein is Rhamnulose-1-phosphate aldolase of Mannheimia succiniciproducens (strain KCTC 0769BP / MBEL55E).